The primary structure comprises 391 residues: Alanine racemase (391 aa).

Residue Lys46 is the Proton acceptor; specific for D-alanine of the active site. Lys46 carries the post-translational modification N6-(pyridoxal phosphate)lysine. Arg148 is a substrate binding site. Residue Tyr283 is the Proton acceptor; specific for L-alanine of the active site. Met331 is a substrate binding site.

Belongs to the alanine racemase family. Pyridoxal 5'-phosphate is required as a cofactor.

The enzyme catalyses L-alanine = D-alanine. Its pathway is amino-acid biosynthesis; D-alanine biosynthesis; D-alanine from L-alanine: step 1/1. Catalyzes the interconversion of L-alanine and D-alanine. May also act on other amino acids. The polypeptide is Alanine racemase (alr) (Streptomyces coelicolor (strain ATCC BAA-471 / A3(2) / M145)).